The following is a 51-amino-acid chain: VTVDCSGYPKPDCTLESFPLCGSDNQTYSNKCAFCNAAVERNVTLRHLGEC.

Residues 3–51 (VDCSGYPKPDCTLESFPLCGSDNQTYSNKCAFCNAAVERNVTLRHLGEC) form the Kazal-like domain. 3 disulfides stabilise this stretch: Cys5-Cys35, Cys13-Cys32, and Cys21-Cys51. Residue Asn42 is glycosylated (N-linked (GlcNAc...) asparagine).

It localises to the secreted. The polypeptide is Ovomucoid (Rhynchotus rufescens (Red-winged tinamou)).